The following is a 166-amino-acid chain: 6,7-dimethyl-8-ribityllumazine synthase (166 aa).

5-amino-6-(D-ribitylamino)uracil is bound by residues Phe-24, 58–60, and 82–84; these read ALE and AVI. 87 to 88 is a binding site for (2S)-2-hydroxy-3-oxobutyl phosphate; the sequence is ET. His-90 serves as the catalytic Proton donor. Asn-115 is a 5-amino-6-(D-ribitylamino)uracil binding site. Residue Arg-129 coordinates (2S)-2-hydroxy-3-oxobutyl phosphate.

Belongs to the DMRL synthase family.

It catalyses the reaction (2S)-2-hydroxy-3-oxobutyl phosphate + 5-amino-6-(D-ribitylamino)uracil = 6,7-dimethyl-8-(1-D-ribityl)lumazine + phosphate + 2 H2O + H(+). The protein operates within cofactor biosynthesis; riboflavin biosynthesis; riboflavin from 2-hydroxy-3-oxobutyl phosphate and 5-amino-6-(D-ribitylamino)uracil: step 1/2. Functionally, catalyzes the formation of 6,7-dimethyl-8-ribityllumazine by condensation of 5-amino-6-(D-ribitylamino)uracil with 3,4-dihydroxy-2-butanone 4-phosphate. This is the penultimate step in the biosynthesis of riboflavin. In Ralstonia pickettii (strain 12J), this protein is 6,7-dimethyl-8-ribityllumazine synthase.